A 269-amino-acid polypeptide reads, in one-letter code: Aegyptin-like protein (269 aa).

A signal peptide spans 1–19 (MKLLLLLASVLCLALIVSA). Positions 19–152 (ARPSDETTDQ…GGAEGGEESP (134 aa)) are disordered. The GE-rich region which mediates binding of Ca(2+) stretch occupies residues 38 to 148 (TSDSYHQEED…AGEEGGAEGG (111 aa)). 3 stretches are compositionally biased toward acidic residues: residues 56 to 73 (GTEDGNSEDDSSELESSS), 98 to 121 (GEEDEAGEEGEAGEEGEAGEEGGA), and 131 to 149 (GGADEEGSAGEEGGAEGGE). Residues 148 to 269 (GEESPVNTYH…DCIVEKRDSE (122 aa)) are mediates binding of host collagen and inhibition of platelet aggregation. 2 cysteine pairs are disulfide-bonded: cysteine 208–cysteine 261 and cysteine 230–cysteine 239.

Belongs to the aegyptin family. As to expression, female saliva (at protein level). Distal lateral lobes of female salivary gland (at protein level). Low-level expression in male salivary gland. Not detected in female and male carcasses.

Its subcellular location is the secreted. In terms of biological role, modulates blood feeding of female mosquitoes on vertebrate hosts. Inhibits collagen-induced platelet aggregation in the host via preventing collagen interaction with its ligands: glycoprotein VI and integrin alpha-2/beta-1 (ITGA2/ITGB1). Inhibits collagen-induced increase of Ca(2+) levels in host platelets. Binds to host collagens. Binds Ca(2+). Prevents a decrease in platelet count in the host blood after collagen injection. (Microbial infection) Does not affect the development of Plasmodium berghei parasites in mosquitoes. The polypeptide is Aegyptin-like protein (Anopheles stephensi (Indo-Pakistan malaria mosquito)).